We begin with the raw amino-acid sequence, 749 residues long: Probable galactinol--sucrose galactosyltransferase 6 (749 aa).

Belongs to the glycosyl hydrolases 36 family.

The enzyme catalyses alpha-D-galactosyl-(1-&gt;3)-1D-myo-inositol + sucrose = raffinose + myo-inositol. In terms of biological role, transglycosidase operating by a ping-pong reaction mechanism. Involved in the synthesis of raffinose, a major soluble carbohydrate in seeds, roots and tubers. This is Probable galactinol--sucrose galactosyltransferase 6 (RFS6) from Arabidopsis thaliana (Mouse-ear cress).